Reading from the N-terminus, the 236-residue chain is GLIPR1-like protein 1 (236 aa).

The first 27 residues, 1 to 27, serve as a signal peptide directing secretion; that stretch reads MALKKKLNFLWTLVLYLIASRLPKAFG. Residues 46–178 form the SCP domain; sequence LNIHNELRRK…FSAGLFVCNY (133 aa). An N-linked (GlcNAc...) asparagine glycan is attached at N126.

The protein belongs to the CRISP family. Part of a oolemmal binding multimeric complex (IZUMO1 complex) composed at least of IZUMO1 and GLIPR1L1; the complex assemblage is influenced by the maturation status of the male germ cell. Interacts with IZUMO1. Post-translationally, N-glycosylated. N-glycosylation decreases during the transit in the caput. In terms of tissue distribution, expressed in testis (at protein level). Little or no expression in other tissues tested.

It localises to the cytoplasmic vesicle. The protein resides in the secretory vesicle. Its subcellular location is the acrosome. The protein localises to the cell membrane. It is found in the membrane raft. It localises to the secreted. Functionally, required for optimal fertilization at the stage of sperm-oocyte fusion, plays a role in optimizing acrosome function, the translocation of IZUMO1 during the acrosome reaction and the fertilization process. Component of epididymosomes, one type of membranous microvesicules which mediate the transfer of lipids and proteins to spermatozoa plasma membrane during epididymal maturation. Also component of the CD9-positive microvesicules found in the cauda region. This is GLIPR1-like protein 1 from Mus musculus (Mouse).